The following is a 196-amino-acid chain: Ribosome maturation factor RimP (196 aa).

Positions 164–196 (LAPQKPNKPGPKKPGHDKKKPSNEPAAGKPRAE) are disordered. Positions 173-182 (GPKKPGHDKK) are enriched in basic residues.

This sequence belongs to the RimP family.

The protein localises to the cytoplasm. Required for maturation of 30S ribosomal subunits. The protein is Ribosome maturation factor RimP of Xanthomonas campestris pv. campestris (strain B100).